Here is a 198-residue protein sequence, read N- to C-terminus: Carnitine operon protein CaiE (198 aa).

A disordered region spans residues 179-198 (VEENRPRLKGTTDVKPKSAQ). Residues 180 to 198 (EENRPRLKGTTDVKPKSAQ) show a composition bias toward basic and acidic residues.

Belongs to the transferase hexapeptide repeat family.

It participates in amine and polyamine metabolism; carnitine metabolism. Its function is as follows. Overproduction of CaiE stimulates the activity of CaiB and CaiD. This Salmonella enteritidis PT4 (strain P125109) protein is Carnitine operon protein CaiE.